A 66-amino-acid polypeptide reads, in one-letter code: Beta-toxin Cb1 (66 aa).

The LCN-type CS-alpha/beta domain occupies 1 to 66; that stretch reads KEGYIVNHST…VWPLPKKTCN (66 aa). Cystine bridges form between Cys-12–Cys-65, Cys-16–Cys-41, Cys-25–Cys-46, and Cys-29–Cys-48.

Belongs to the long (4 C-C) scorpion toxin superfamily. Sodium channel inhibitor family. Beta subfamily. As to expression, expressed by the venom gland.

It is found in the secreted. With respect to regulation, inhibited by human antibodies scFvs 10FG2 and LR. Beta toxins bind voltage-independently at site-4 of sodium channels (Nav) and reduces peak current and shifts the voltage of activation toward more negative potentials thereby affecting sodium channel activation and promoting spontaneous and repetitive firing. Has an inhibitory effect on voltage-gated sodium channel hNav1.6/SCN8A, affecting both the activation and inactivation processes. This toxin is active against mammals and lethal to mice. This chain is Beta-toxin Cb1, found in Centruroides baergi (Scorpion).